A 288-amino-acid polypeptide reads, in one-letter code: Shikimate dehydrogenase (NADP(+)) (288 aa).

Shikimate contacts are provided by residues 15-17 and Thr-64; that span reads SKS. Lys-68 functions as the Proton acceptor in the catalytic mechanism. Glu-83 is an NADP(+) binding site. Asn-92 and Asp-117 together coordinate shikimate. NADP(+)-binding positions include 141–145, 165–170, and Met-232; these read GAGGA and NRTLSK. Tyr-234 provides a ligand contact to shikimate. Gly-254 provides a ligand contact to NADP(+).

It belongs to the shikimate dehydrogenase family. In terms of assembly, homodimer.

The catalysed reaction is shikimate + NADP(+) = 3-dehydroshikimate + NADPH + H(+). It participates in metabolic intermediate biosynthesis; chorismate biosynthesis; chorismate from D-erythrose 4-phosphate and phosphoenolpyruvate: step 4/7. Involved in the biosynthesis of the chorismate, which leads to the biosynthesis of aromatic amino acids. Catalyzes the reversible NADPH linked reduction of 3-dehydroshikimate (DHSA) to yield shikimate (SA). The chain is Shikimate dehydrogenase (NADP(+)) from Psychrobacter arcticus (strain DSM 17307 / VKM B-2377 / 273-4).